Consider the following 685-residue polypeptide: Phenoloxidase subunit 1 (685 aa).

Cu cation is bound by residues histidine 209, histidine 213, and histidine 239. Residue glutamate 351 is the Proton acceptor of the active site. Residues histidine 366, histidine 370, and histidine 406 each contribute to the Cu cation site. Disulfide bonds link cysteine 580/cysteine 622 and cysteine 582/cysteine 629.

In terms of assembly, heterodimer. Forms a complex with an interleukin 1-like protein as a consequence of a host defense response. The cofactor is Cu(2+). Post-translationally, the N-terminus is blocked. In terms of tissue distribution, synthesized by oenocytoids, a type of hemocyte, and released into the hemolymph plasma.

Its subcellular location is the secreted. The catalysed reaction is 2 L-dopa + O2 = 2 L-dopaquinone + 2 H2O. The enzyme catalyses L-tyrosine + O2 = L-dopaquinone + H2O. Activated by immulectin and lipopolysaccharide. Its function is as follows. This is a copper-containing oxidase that functions in the formation of pigments such as melanins and other polyphenolic compounds. Catalyzes the rate-limiting conversions of tyrosine to DOPA, DOPA to DOPA-quinone and possibly 5,6 dihydroxyindole to indole-5'6 quinone. Binds to the surface of hemocytes and is involved in hemocyte melanization. This is Phenoloxidase subunit 1 from Manduca sexta (Tobacco hawkmoth).